A 604-amino-acid polypeptide reads, in one-letter code: Threonine--tRNA ligase (604 aa).

Residues 210–501 form a catalytic region; sequence DHRKIGTEME…LTEHYAGEFP (292 aa). Positions 302, 353, and 478 each coordinate Zn(2+).

Belongs to the class-II aminoacyl-tRNA synthetase family. In terms of assembly, homodimer. Zn(2+) is required as a cofactor.

The protein resides in the cytoplasm. The enzyme catalyses tRNA(Thr) + L-threonine + ATP = L-threonyl-tRNA(Thr) + AMP + diphosphate + H(+). Its function is as follows. Catalyzes the attachment of threonine to tRNA(Thr) in a two-step reaction: L-threonine is first activated by ATP to form Thr-AMP and then transferred to the acceptor end of tRNA(Thr). Also edits incorrectly charged L-seryl-tRNA(Thr). This Sulfurovum sp. (strain NBC37-1) protein is Threonine--tRNA ligase.